Here is a 240-residue protein sequence, read N- to C-terminus: Uridylate kinase (240 aa).

Position 12-15 (lysine 12–glycine 15) interacts with ATP. The involved in allosteric activation by GTP stretch occupies residues glycine 20 to glycine 25. Glycine 54 is a UMP binding site. Glycine 55 and arginine 59 together coordinate ATP. Residues aspartate 74 and threonine 135–threonine 142 contribute to the UMP site. ATP contacts are provided by asparagine 163, tyrosine 169, and aspartate 172.

Belongs to the UMP kinase family. Homohexamer.

The protein localises to the cytoplasm. The enzyme catalyses UMP + ATP = UDP + ADP. The protein operates within pyrimidine metabolism; CTP biosynthesis via de novo pathway; UDP from UMP (UMPK route): step 1/1. Its activity is regulated as follows. Allosterically activated by GTP. Inhibited by UTP. Its function is as follows. Catalyzes the reversible phosphorylation of UMP to UDP. This is Uridylate kinase from Limosilactobacillus reuteri (strain DSM 20016) (Lactobacillus reuteri).